The sequence spans 137 residues: Large ribosomal subunit protein bL17 (137 aa).

It belongs to the bacterial ribosomal protein bL17 family. Part of the 50S ribosomal subunit. Contacts protein L32.

This is Large ribosomal subunit protein bL17 from Bradyrhizobium sp. (strain BTAi1 / ATCC BAA-1182).